We begin with the raw amino-acid sequence, 79 residues long: Methionine-rich peptide X (79 aa).

A signal peptide spans 1-22; the sequence is MKKLAAVMLTSCLMVAVGASFA. The interval 37-79 is disordered; that stretch reads KKDDMAKDEMKKDSMAKDGMKKDAMKKDAMMKKDGMTKDEMKK.

Post-translationally, protein is oxidized (possibly on Met residues) when cells are exposed to chlorite or hypochlorite; initially the protein is highly oxidized, by 50 minutes all protein is in the reduced form.

It localises to the periplasm. Serves as an oxidative stress sink, specifically for chlorite and hypochlorite. The protein is Methionine-rich peptide X of Azospira oryzae (strain ATCC BAA-33 / DSM 13638 / PS) (Dechlorosoma suillum).